Here is a 555-residue protein sequence, read N- to C-terminus: Dihydroxy-acid dehydratase (555 aa).

Asp78 provides a ligand contact to Mg(2+). A [2Fe-2S] cluster-binding site is contributed by Cys119. Mg(2+) contacts are provided by Asp120 and Lys121. The residue at position 121 (Lys121) is an N6-carboxylysine. Position 191 (Cys191) interacts with [2Fe-2S] cluster. Position 444 (Glu444) interacts with Mg(2+). Ser470 acts as the Proton acceptor in catalysis.

This sequence belongs to the IlvD/Edd family. Homodimer. [2Fe-2S] cluster serves as cofactor. The cofactor is Mg(2+).

The enzyme catalyses (2R)-2,3-dihydroxy-3-methylbutanoate = 3-methyl-2-oxobutanoate + H2O. It catalyses the reaction (2R,3R)-2,3-dihydroxy-3-methylpentanoate = (S)-3-methyl-2-oxopentanoate + H2O. It functions in the pathway amino-acid biosynthesis; L-isoleucine biosynthesis; L-isoleucine from 2-oxobutanoate: step 3/4. Its pathway is amino-acid biosynthesis; L-valine biosynthesis; L-valine from pyruvate: step 3/4. In terms of biological role, functions in the biosynthesis of branched-chain amino acids. Catalyzes the dehydration of (2R,3R)-2,3-dihydroxy-3-methylpentanoate (2,3-dihydroxy-3-methylvalerate) into 2-oxo-3-methylpentanoate (2-oxo-3-methylvalerate) and of (2R)-2,3-dihydroxy-3-methylbutanoate (2,3-dihydroxyisovalerate) into 2-oxo-3-methylbutanoate (2-oxoisovalerate), the penultimate precursor to L-isoleucine and L-valine, respectively. This is Dihydroxy-acid dehydratase from Oleidesulfovibrio alaskensis (strain ATCC BAA-1058 / DSM 17464 / G20) (Desulfovibrio alaskensis).